The sequence spans 481 residues: Glycogen synthase (481 aa).

ADP-alpha-D-glucose is bound at residue lysine 16.

The protein belongs to the glycosyltransferase 1 family. Bacterial/plant glycogen synthase subfamily.

The enzyme catalyses [(1-&gt;4)-alpha-D-glucosyl](n) + ADP-alpha-D-glucose = [(1-&gt;4)-alpha-D-glucosyl](n+1) + ADP + H(+). It participates in glycan biosynthesis; glycogen biosynthesis. In terms of biological role, synthesizes alpha-1,4-glucan chains using ADP-glucose. The protein is Glycogen synthase of Lacticaseibacillus casei (strain BL23) (Lactobacillus casei).